A 3011-amino-acid chain; its full sequence is Chromodomain-helicase-DNA-binding protein 7 (3011 aa).

5 disordered regions span residues isoleucine 90–glycine 146, proline 159–glutamine 189, methionine 202–glycine 422, glutamine 502–isoleucine 806, and proline 941–serine 960. Over residues proline 159 to glutamine 168 the composition is skewed to low complexity. Positions proline 169–proline 179 are enriched in pro residues. The span at glutamine 203–glutamine 215 shows a compositional bias: low complexity. Polar residues-rich tracts occupy residues phenylalanine 216–asparagine 227, valine 241–glutamine 258, glutamine 291–valine 347, and glycine 374–tyrosine 393. Positions glutamine 502–proline 516 are enriched in low complexity. Composition is skewed to polar residues over residues threonine 576–valine 586 and aspartate 630–cysteine 641. Basic and acidic residues-rich tracts occupy residues lysine 655 to glutamate 684 and lysine 718 to lysine 730. Over residues glutamine 747 to arginine 759 the composition is skewed to basic residues. Over residues tyrosine 760–aspartate 770 the composition is skewed to basic and acidic residues. Positions serine 783–serine 795 are enriched in polar residues. Chromo domains lie at proline 801 to lysine 868 and valine 883 to arginine 948. The Helicase ATP-binding domain occupies leucine 981–glycine 1155. Aspartate 994–threonine 1001 is an ATP binding site. Positions aspartate 1106–histidine 1109 match the DEAH box motif. The region spanning leucine 1295 to leucine 1465 is the Helicase C-terminal domain. Disordered stretches follow at residues phenylalanine 1577–tyrosine 1602, glycine 1836–isoleucine 1869, and glycine 2136–methionine 2291. Positions glutamate 1585–aspartate 1597 are enriched in basic and acidic residues. Residues aspartate 1845–proline 1856 show a composition bias toward acidic residues. The span at glutamate 1857 to aspartate 1867 shows a compositional bias: basic and acidic residues. The segment covering glycine 2136–serine 2145 has biased composition (polar residues). Composition is skewed to basic and acidic residues over residues glutamine 2166–cysteine 2207 and cysteine 2218–glycine 2238. Positions serine 2239–serine 2253 are enriched in acidic residues. Residues arginine 2403–glutamine 2433 adopt a coiled-coil conformation. Serine 2561 is subject to Phosphoserine. Disordered regions lie at residues threonine 2825–asparagine 2900 and glycine 2946–glutamate 3011. A compositionally biased stretch (basic and acidic residues) spans glycine 2841–glutamate 2851. The segment covering aspartate 2864 to serine 2877 has biased composition (polar residues). A compositionally biased stretch (low complexity) spans alanine 2878–threonine 2893. Positions asparagine 2948–glutamate 2964 are enriched in basic and acidic residues. Composition is skewed to acidic residues over residues glutamate 2965–glutamate 2974 and isoleucine 2984–glutamate 3011.

The protein belongs to the SNF2/RAD54 helicase family. In terms of tissue distribution, expressed in the neural epithelium, otic placodes, optic placodes, branchial arches, and the olfactory placodes,.

The protein localises to the nucleus. The enzyme catalyses ATP + H2O = ADP + phosphate + H(+). ATP-dependent chromatin-remodeling factor, slides nucleosomes along DNA; nucleosome sliding requires ATP.Probable transcription regulator. Maybe involved in the in 45S precursor rRNA production. The chain is Chromodomain-helicase-DNA-binding protein 7 (CHD7) from Gallus gallus (Chicken).